A 78-amino-acid chain; its full sequence is DNA-directed RNA polymerase subunit Rpo5 (78 aa).

It belongs to the archaeal Rpo5/eukaryotic RPB5 RNA polymerase subunit family. As to quaternary structure, part of the RNA polymerase complex.

The protein resides in the cytoplasm. The enzyme catalyses RNA(n) + a ribonucleoside 5'-triphosphate = RNA(n+1) + diphosphate. Its function is as follows. DNA-dependent RNA polymerase (RNAP) catalyzes the transcription of DNA into RNA using the four ribonucleoside triphosphates as substrates. The polypeptide is DNA-directed RNA polymerase subunit Rpo5 (Methanococcoides burtonii (strain DSM 6242 / NBRC 107633 / OCM 468 / ACE-M)).